Here is a 253-residue protein sequence, read N- to C-terminus: Proteasome subunit alpha type-7 (253 aa).

Belongs to the peptidase T1A family. The 26S proteasome consists of a 20S proteasome core and two 19S regulatory subunits. The 20S proteasome core is composed of 28 subunits that are arranged in four stacked rings, resulting in a barrel-shaped structure. The two end rings are each formed by seven alpha subunits, and the two central rings are each formed by seven beta subunits. The catalytic chamber with the active sites is on the inside of the barrel.

The protein resides in the cytoplasm. The protein localises to the nucleus. Functionally, the proteasome is a multicatalytic proteinase complex which is characterized by its ability to cleave peptides with Arg, Phe, Tyr, Leu, and Glu adjacent to the leaving group at neutral or slightly basic pH. The proteasome has an ATP-dependent proteolytic activity. The sequence is that of Proteasome subunit alpha type-7 (pas-4) from Caenorhabditis elegans.